We begin with the raw amino-acid sequence, 399 residues long: Argininosuccinate synthase (399 aa).

ATP contacts are provided by residues 10–18 and alanine 38; that span reads AYSGGVDTS. Residue tyrosine 89 participates in L-citrulline binding. Glycine 119 provides a ligand contact to ATP. L-aspartate-binding residues include threonine 121, asparagine 125, and aspartate 126. Asparagine 125 lines the L-citrulline pocket. Residues arginine 129, serine 177, serine 186, glutamate 262, and tyrosine 274 each coordinate L-citrulline.

This sequence belongs to the argininosuccinate synthase family. Type 1 subfamily. In terms of assembly, homotetramer.

It localises to the cytoplasm. It carries out the reaction L-citrulline + L-aspartate + ATP = 2-(N(omega)-L-arginino)succinate + AMP + diphosphate + H(+). The protein operates within amino-acid biosynthesis; L-arginine biosynthesis; L-arginine from L-ornithine and carbamoyl phosphate: step 2/3. The chain is Argininosuccinate synthase from Picosynechococcus sp. (strain ATCC 27264 / PCC 7002 / PR-6) (Agmenellum quadruplicatum).